The chain runs to 425 residues: Adenosylhomocysteinase (425 aa).

Substrate contacts are provided by Thr-60, Asp-132, and Glu-157. 158-160 (TTT) is an NAD(+) binding site. Substrate is bound by residues Lys-187 and Asp-191. Residues Asn-192, 221–226 (GYGWCG), Glu-244, Asn-279, 300–302 (SGH), and Asn-347 contribute to the NAD(+) site.

The protein belongs to the adenosylhomocysteinase family. It depends on NAD(+) as a cofactor.

Its subcellular location is the cytoplasm. The enzyme catalyses S-adenosyl-L-homocysteine + H2O = L-homocysteine + adenosine. It participates in amino-acid biosynthesis; L-homocysteine biosynthesis; L-homocysteine from S-adenosyl-L-homocysteine: step 1/1. In terms of biological role, may play a key role in the regulation of the intracellular concentration of adenosylhomocysteine. This Nostoc sp. (strain PCC 7120 / SAG 25.82 / UTEX 2576) protein is Adenosylhomocysteinase.